We begin with the raw amino-acid sequence, 438 residues long: Transposon Ty2-F Gag polyprotein (438 aa).

Polar residues-rich tracts occupy residues 1–11, 19–39, and 49–60; these read MESQQLHQNPH, ASVTSKEVPSNQDPLAVSASN, and KVNSQQETTPGT. Disordered stretches follow at residues 1–86, 366–397, and 419–438; these read MESQ…GQYQ, VSRTSPNTTNTKVTTRNYHRTNSSKPRAAKAH, and SSQYLSDDNELSLRPATERI. Residues 295–397 are RNA-binding; the sequence is ENNINVSDRL…SSKPRAAKAH (103 aa). The span at 369–381 shows a compositional bias: low complexity; sequence TSPNTTNTKVTTR.

In terms of assembly, homotrimer.

The protein localises to the cytoplasm. In terms of biological role, capsid protein (CA) is the structural component of the virus-like particle (VLP), forming the shell that encapsulates the retrotransposons dimeric RNA genome. The particles are assembled from trimer-clustered units and there are holes in the capsid shells that allow for the diffusion of macromolecules. CA also has nucleocapsid-like chaperone activity, promoting primer tRNA(i)-Met annealing to the multipartite primer-binding site (PBS), dimerization of Ty2 RNA and initiation of reverse transcription. The chain is Transposon Ty2-F Gag polyprotein (TY2A-F) from Saccharomyces cerevisiae (strain ATCC 204508 / S288c) (Baker's yeast).